Here is a 1036-residue protein sequence, read N- to C-terminus: Hexagonally packed intermediate-layer surface protein (1036 aa).

Residues Met1 to Ala17 form the signal peptide. 3 disulfide bridges follow: Cys74/Cys86, Cys256/Cys275, and Cys642/Cys754.

Glycosylated; contains six glycans. In terms of processing, acylated in the N-terminal region. Post-translationally, the N-terminus is blocked.

It localises to the secreted. The protein resides in the cell wall. The protein localises to the S-layer. Shape maintenance, possible protection from noxious enzymes or exogenous and unsettling DNA, and may mediate homotypic cell-cell contacts. This Deinococcus radiodurans protein is Hexagonally packed intermediate-layer surface protein (hpi).